The primary structure comprises 658 residues: Structure-specific endonuclease subunit SLX1 (658 aa).

Positions 12–92 constitute a GIY-YIG domain; sequence PFYACYFLRS…AKPHLSRHLK (81 aa). 4 disordered regions span residues 29–52, 239–269, 288–328, and 594–658; these read YIGSTPAPPRRKRQHNGHLTQGAY, GVAEHPVKKRQTSSRQKPHTEETSAWPETLP, PIPQ…NGVD, and TTSR…IDLT. Composition is skewed to basic and acidic residues over residues 308–324 and 627–640; these read KLSDKARPSALEDHDAE and SKIDGDGAGKDTKK. The segment covering 641-652 has biased composition (polar residues); sequence NTTQKAKSNETS.

Belongs to the SLX1 family. As to quaternary structure, forms a heterodimer with SLX4. It depends on a divalent metal cation as a cofactor.

It is found in the nucleus. Its function is as follows. Catalytic subunit of the SLX1-SLX4 structure-specific endonuclease that resolves DNA secondary structures generated during DNA repair and recombination. Has endonuclease activity towards branched DNA substrates, introducing single-strand cuts in duplex DNA close to junctions with ss-DNA. This is Structure-specific endonuclease subunit SLX1 from Mycosarcoma maydis (Corn smut fungus).